Here is a 313-residue protein sequence, read N- to C-terminus: L-2-hydroxycarboxylate dehydrogenase (NAD(P)(+)) (313 aa).

Residues 7–13 (GASGRVG) and 34–37 (REHS) each bind NADP(+). The substrate site is built by Arg-86 and Arg-92. Residues Asn-99 and 121 to 123 (ITN) contribute to the NADP(+) site. Residues Asn-123 and Arg-154 each contribute to the substrate site. His-178 serves as the catalytic Proton acceptor.

Belongs to the LDH/MDH superfamily. In terms of assembly, homotetramer.

Its subcellular location is the cytoplasm. It carries out the reaction a (2S)-2-hydroxycarboxylate + NAD(+) = a 2-oxocarboxylate + NADH + H(+). The catalysed reaction is a (2S)-2-hydroxycarboxylate + NADP(+) = a 2-oxocarboxylate + NADPH + H(+). Catalyzes the reversible oxidation of (S)-malate and (S)-sulfolactate to oxaloacetate and sulfopyruvate, respectively. Can use both NADH and NADPH, although activity is higher with NADPH. Oxidation of (S)-sulfolactate is observed only in the presence of NADP(+). Can also oxidize tartrate. Cannot reduce pyruvate, nor alpha-ketoglutarate. The chain is L-2-hydroxycarboxylate dehydrogenase (NAD(P)(+)) (mdh) from Methanocaldococcus jannaschii (strain ATCC 43067 / DSM 2661 / JAL-1 / JCM 10045 / NBRC 100440) (Methanococcus jannaschii).